The sequence spans 155 residues: Endoribonuclease YbeY (155 aa).

Zn(2+)-binding residues include His-116, His-120, and His-126.

Belongs to the endoribonuclease YbeY family. Zn(2+) serves as cofactor.

It is found in the cytoplasm. Single strand-specific metallo-endoribonuclease involved in late-stage 70S ribosome quality control and in maturation of the 3' terminus of the 16S rRNA. The polypeptide is Endoribonuclease YbeY (Thermobifida fusca (strain YX)).